We begin with the raw amino-acid sequence, 316 residues long: HPr kinase/phosphorylase (316 aa).

Active-site residues include His-143 and Lys-164. 158-165 (GEAGSGKS) is a binding site for ATP. Residue Ser-165 participates in Mg(2+) binding. The active-site Proton acceptor; for phosphorylation activity. Proton donor; for dephosphorylation activity is Asp-182. The important for the catalytic mechanism of both phosphorylation and dephosphorylation stretch occupies residues 206–215 (LEVRGLGVLN). Glu-207 serves as a coordination point for Mg(2+). Residue Arg-251 is part of the active site. The segment at 272–277 (PVMPGR) is important for the catalytic mechanism of dephosphorylation.

Belongs to the HPrK/P family. As to quaternary structure, homohexamer. Mg(2+) is required as a cofactor.

It catalyses the reaction [HPr protein]-L-serine + ATP = [HPr protein]-O-phospho-L-serine + ADP + H(+). The catalysed reaction is [HPr protein]-O-phospho-L-serine + phosphate + H(+) = [HPr protein]-L-serine + diphosphate. Catalyzes the ATP- as well as the pyrophosphate-dependent phosphorylation of a specific serine residue in HPr, a phosphocarrier protein of the phosphoenolpyruvate-dependent sugar phosphotransferase system (PTS). HprK/P also catalyzes the pyrophosphate-producing, inorganic phosphate-dependent dephosphorylation (phosphorolysis) of seryl-phosphorylated HPr (P-Ser-HPr). In Stenotrophomonas maltophilia (strain K279a), this protein is HPr kinase/phosphorylase.